A 246-amino-acid polypeptide reads, in one-letter code: DNA repair protein RecO (246 aa).

The protein belongs to the RecO family.

Functionally, involved in DNA repair and RecF pathway recombination. The chain is DNA repair protein RecO from Methylorubrum populi (strain ATCC BAA-705 / NCIMB 13946 / BJ001) (Methylobacterium populi).